Reading from the N-terminus, the 344-residue chain is Beta-1,4-galactosyltransferase 4 (344 aa).

Topologically, residues 1 to 12 are cytoplasmic; that stretch reads MGCNPPYHLSYR. A helical; Signal-anchor for type II membrane protein membrane pass occupies residues 13–38; it reads LRLLLLFTLCLTVVGWATSNYFVGAI. The Lumenal segment spans residues 39–344; sequence QVIPKAKDFM…NITVDFWTAA (306 aa). Residues Cys77 and Cys118 are joined by a disulfide bond. Residues 129–133, 168–170, and 195–196 contribute to the UDP-alpha-D-galactose site; these read PHRNR, FNR, and VD. A disulfide bond links Cys189 and Cys208. Asp196 lines the Mn(2+) pocket. N-linked (GlcNAc...) asparagine glycosylation occurs at Asn220. UDP-alpha-D-galactose-binding residues include Tyr224 and Trp256. 258 to 261 provides a ligand contact to N-acetyl-D-glucosamine; the sequence is GEDD. His289 contributes to the Mn(2+) binding site. Residue 289–291 participates in UDP-alpha-D-galactose binding; the sequence is HTR. Residue Arg301 participates in N-acetyl-D-glucosamine binding. A glycan (N-linked (GlcNAc...) asparagine) is linked at Asn335.

Belongs to the glycosyltransferase 7 family. Interacts with SLC35A2/UGT1. Mn(2+) is required as a cofactor.

Its subcellular location is the golgi apparatus membrane. The protein resides in the secreted. The enzyme catalyses N-acetyl-D-glucosamine + UDP-alpha-D-galactose = beta-D-galactosyl-(1-&gt;4)-N-acetyl-D-glucosamine + UDP + H(+). The catalysed reaction is a beta-D-GlcNAc-(1-&gt;3)-beta-D-Gal-(1-&gt;4)-beta-D-Glc-(1&lt;-&gt;1)-Cer(d18:1(4E)) + UDP-alpha-D-galactose = a neolactoside nLc4Cer(d18:1(4E)) + UDP + H(+). It carries out the reaction 3-O-{beta-D-galactosyl-(1-&gt;3)-[6-O-sulfo-N-acetyl-beta-D-glucosaminyl-(1-&gt;6)]-N-acetyl-alpha-D-galactosaminyl}-L-seryl-[protein] + UDP-alpha-D-galactose = 3-O-{beta-D-galactosyl-(1-&gt;3)-[beta-D-galactosyl-(1-&gt;4)-6-O-sulfo-N-acetyl-beta-D-glucosaminyl-(1-&gt;6)]-N-acetyl-alpha-D-galactosaminyl}-L-seryl-[protein] + UDP + H(+). It catalyses the reaction 3-O-{beta-D-galactosyl-(1-&gt;3)-[6-O-sulfo-N-acetyl-beta-D-glucosaminyl-(1-&gt;6)]-N-acetyl-alpha-D-galactosaminyl}-L-threonyl-[protein] + UDP-alpha-D-galactose = 3-O-{beta-D-galactosyl-(1-&gt;3)-[beta-D-galactosyl-(1-&gt;4)-6-O-sulfo-N-acetyl-beta-D-glucosaminyl-(1-&gt;6)]-N-acetyl-alpha-D-galactosaminyl}-L-threonyl-[protein] + UDP + H(+). It participates in protein modification; protein glycosylation. It functions in the pathway glycolipid biosynthesis. Galactose (Gal) transferase involved in the synthesis of terminal N-acetyllactosamine (LacNac) unit present on glycan chains of glycoproteins and glycosphingolipids. Catalyzes the transfer of Gal residue via a beta1-&gt;4 linkage from UDP-Gal to the non-reducing terminal N-acetyl glucosamine 6-O-sulfate (6-O-sulfoGlcNAc) in the linearly growing chain of both N- and O-linked keratan sulfate proteoglycans. Cooperates with B3GNT7 N-acetyl glucosamine transferase and CHST6 and CHST1 sulfotransferases to construct and elongate mono- and disulfated disaccharide units [-&gt;3Galbeta1-&gt;4(6-sulfoGlcNAcbeta)1-&gt;] and [-&gt;3(6-sulfoGalbeta)1-&gt;4(6-sulfoGlcNAcbeta)1-&gt;] within keratan sulfate polymer. Transfers Gal residue via a beta1-&gt;4 linkage to terminal 6-O-sulfoGlcNAc within the LacNac unit of core 2 O-glycans forming 6-sulfo-sialyl-Lewis X (sLex). May contribute to the generation of sLex epitope on mucin-type glycoproteins that serve as ligands for SELL/L-selectin, a major regulator of leukocyte migration. In the biosynthesis pathway of neolacto-series glycosphingolipids, transfers Gal residue via a beta1-&gt;4 linkage to terminal GlcNAc of a lactotriaosylceramide (Lc3Cer) acceptor to form a neolactotetraosylceramide. The chain is Beta-1,4-galactosyltransferase 4 from Mus musculus (Mouse).